A 196-amino-acid polypeptide reads, in one-letter code: uncharacterized protein (196 aa).

An N-terminal signal peptide occupies residues 1–23 (MSARAPKELRLALPPCLLNRTFA). 2 N-linked (GlcNAc...) asparagine glycosylation sites follow: asparagine 19 and asparagine 26. Residues 24–60 (SHNASGGSNAGIRSSGAGGGTCITQVGQQLFQSFSST) are Extracellular-facing. A helical membrane pass occupies residues 61-81 (LVLIVLVTLIFCLIVLSLSTF). The Cytoplasmic portion of the chain corresponds to 82–196 (HIHKRRMKKR…EGLLQTVVLS (115 aa)). The tract at residues 93-184 (MQRAQEEYER…AHAASSCLDT (92 aa)) is disordered. Basic and acidic residues-rich tracts occupy residues 95-106 (RAQEEYERDHCS) and 124-135 (HGKETRLERQPR). A compositionally biased stretch (pro residues) spans 161–171 (CAPPPPPPVPS). Low complexity predominate over residues 172–181 (PHGAHAASSC).

Its subcellular location is the membrane. This is an uncharacterized protein from Rattus norvegicus (Rat).